A 225-amino-acid chain; its full sequence is Ribonuclease T (225 aa).

Residues 1 to 21 are disordered; the sequence is MSEDHFDDEHEGHGGGGGSRH. The Exonuclease domain occupies 33-207; sequence VVVDVETGGF…YDTEKTAELF (175 aa). Mg(2+) contacts are provided by Asp36, Glu38, His194, and Asp199. The active-site Proton donor/acceptor is the His194.

Belongs to the RNase T family. As to quaternary structure, homodimer. Mg(2+) serves as cofactor.

Its function is as follows. Trims short 3' overhangs of a variety of RNA species, leaving a one or two nucleotide 3' overhang. Responsible for the end-turnover of tRNA: specifically removes the terminal AMP residue from uncharged tRNA (tRNA-C-C-A). Also appears to be involved in tRNA biosynthesis. In Pseudomonas syringae pv. syringae (strain B728a), this protein is Ribonuclease T.